Reading from the N-terminus, the 584-residue chain is Endogenous retrovirus group FC1 Env polyprotein (584 aa).

The signal sequence occupies residues 1–22 (MARPSPLCLLLLLTLLPPIVPS). The Extracellular portion of the chain corresponds to 23–514 (NSLLTEPPFR…NYGGGWWQSP (492 aa)). N-linked (GlcNAc...) asparagine glycans are attached at residues N69 and N247. The short motif at 251-254 (CFLC) is the CXXC element. Residues N272, N276, N308, N313, N322, N334, N342, and N346 are each glycosylated (N-linked (GlcNAc...) asparagine). Positions 388-413 (PLVIGVSLTSSLVASGLGTGAIVHFI) are fusion peptide. The CKS-17 motif lies at 449–465 (MQNRRALDLLTADKGGT). Residues C466 and C473 are joined by a disulfide bond. The CX6CC signature appears at 466-474 (CMFLGEECC). N478 is a glycosylation site (N-linked (GlcNAc...) asparagine). The helical transmembrane segment at 515–540 (LTTWIIPFISPILIICLLLLIAPCVL) threads the bilayer. Residues 541-584 (KFIKNRISEVSRVTVNQMLLHPYSRLPTSEDHYDVALTQQEAAR) lie on the Cytoplasmic side of the membrane.

The protein belongs to the gamma type-C retroviral envelope protein family. HERV class-I F(c)1 env subfamily. In terms of assembly, the surface (SU) and transmembrane (TM) proteins form a heterodimer. SU and TM are attached by noncovalent interactions or by a labile interchain disulfide bond. Specific enzymatic cleavages in vivo yield the mature SU and TM proteins. Post-translationally, the CXXC motif is highly conserved across a broad range of retroviral envelope proteins. It is thought to participate in the formation of a labile disulfide bond possibly with the CX6CC motif present in the transmembrane protein.

It localises to the virion. Its subcellular location is the cell membrane. In terms of biological role, retroviral envelope proteins mediate receptor recognition and membrane fusion during early infection. Endogenous envelope proteins may have kept, lost or modified their original function during evolution. This endogenous envelope protein has lost its original fusogenic properties. SU mediates receptor recognition. Its function is as follows. TM anchors the envelope heterodimer to the viral membrane through one transmembrane domain. The other hydrophobic domain, called fusion peptide, mediates fusion of the viral membrane with the target cell membrane. The polypeptide is Endogenous retrovirus group FC1 Env polyprotein (ERVFC1) (Pan troglodytes (Chimpanzee)).